The following is a 943-amino-acid chain: Isoleucine--tRNA ligase (943 aa).

The 'HIGH' region signature appears at 58 to 68; it reads PYANGNIHIGH. Glu-567 is a binding site for L-isoleucyl-5'-AMP. The 'KMSKS' region signature appears at 608–612; the sequence is KMSKS. An ATP-binding site is contributed by Lys-611. Zn(2+) is bound by residues Cys-906, Cys-909, Cys-926, and Cys-929.

This sequence belongs to the class-I aminoacyl-tRNA synthetase family. IleS type 1 subfamily. As to quaternary structure, monomer. Zn(2+) is required as a cofactor.

The protein localises to the cytoplasm. It carries out the reaction tRNA(Ile) + L-isoleucine + ATP = L-isoleucyl-tRNA(Ile) + AMP + diphosphate. Its function is as follows. Catalyzes the attachment of isoleucine to tRNA(Ile). As IleRS can inadvertently accommodate and process structurally similar amino acids such as valine, to avoid such errors it has two additional distinct tRNA(Ile)-dependent editing activities. One activity is designated as 'pretransfer' editing and involves the hydrolysis of activated Val-AMP. The other activity is designated 'posttransfer' editing and involves deacylation of mischarged Val-tRNA(Ile). This Stutzerimonas stutzeri (strain A1501) (Pseudomonas stutzeri) protein is Isoleucine--tRNA ligase.